Here is a 201-residue protein sequence, read N- to C-terminus: tRNA (guanine-N(7)-)-methyltransferase (201 aa).

Glu-33, Glu-58, Asp-85, and Asp-106 together coordinate S-adenosyl-L-methionine. Asp-106 is a catalytic residue. Residues Lys-110, Asp-142, and 180–183 (TTYE) contribute to the substrate site.

The protein belongs to the class I-like SAM-binding methyltransferase superfamily. TrmB family.

It catalyses the reaction guanosine(46) in tRNA + S-adenosyl-L-methionine = N(7)-methylguanosine(46) in tRNA + S-adenosyl-L-homocysteine. It participates in tRNA modification; N(7)-methylguanine-tRNA biosynthesis. Catalyzes the formation of N(7)-methylguanine at position 46 (m7G46) in tRNA. The polypeptide is tRNA (guanine-N(7)-)-methyltransferase (Mesomycoplasma hyopneumoniae (strain 7448) (Mycoplasma hyopneumoniae)).